The primary structure comprises 192 residues: Ras-like protein RAS2 (192 aa).

15-22 (GGGGVGKS) provides a ligand contact to GTP. Positions 37-45 (YDPTIEDSY) match the Effector region motif. GTP contacts are provided by residues 62–66 (DTAGQ) and 121–124 (NKSD). Position 189 is a cysteine methyl ester (Cys189). The S-geranylgeranyl cysteine moiety is linked to residue Cys189. A propeptide spans 190-192 (IVL) (removed in mature form).

Belongs to the small GTPase superfamily. Ras family.

The protein localises to the cell membrane. The enzyme catalyses GTP + H2O = GDP + phosphate + H(+). Its activity is regulated as follows. Alternates between an inactive form bound to GDP and an active form bound to GTP. Activated by a guanine nucleotide-exchange factor (GEF) and inactivated by a GTPase-activating protein (GAP). In terms of biological role, ras proteins bind GDP/GTP and possess intrinsic GTPase activity. The sequence is that of Ras-like protein RAS2 (RAS2) from Hydra vulgaris (Hydra).